A 198-amino-acid chain; its full sequence is Superoxide dismutase [Fe] (198 aa).

His-27, His-74, Asp-158, and His-162 together coordinate Fe cation.

It belongs to the iron/manganese superoxide dismutase family. As to quaternary structure, homodimer. It depends on Fe cation as a cofactor.

It localises to the cytoplasm. The catalysed reaction is 2 superoxide + 2 H(+) = H2O2 + O2. Functionally, destroys superoxide anion radicals which are normally produced within the cells and which are toxic to biological systems. This chain is Superoxide dismutase [Fe] (SODB), found in Plasmodium falciparum (isolate 3D7).